Consider the following 214-residue polypeptide: N-(5'-phosphoribosyl)anthranilate isomerase (214 aa).

Belongs to the TrpF family.

The catalysed reaction is N-(5-phospho-beta-D-ribosyl)anthranilate = 1-(2-carboxyphenylamino)-1-deoxy-D-ribulose 5-phosphate. The protein operates within amino-acid biosynthesis; L-tryptophan biosynthesis; L-tryptophan from chorismate: step 3/5. The sequence is that of N-(5'-phosphoribosyl)anthranilate isomerase from Halorubrum lacusprofundi (strain ATCC 49239 / DSM 5036 / JCM 8891 / ACAM 34).